Reading from the N-terminus, the 1318-residue chain is Ubiquitin carboxyl-terminal hydrolase 19 (1318 aa).

The disordered stretch occupies residues 1 to 109 (MSGGASATGP…GACEDPHDLL (109 aa)). The Cytoplasmic portion of the chain corresponds to 1 to 1291 (MSGGASATGP…TTPDEGCLRY (1291 aa)). The segment covering 28 to 44 (DRANQESKDGDPRKETG) has biased composition (basic and acidic residues). Residues 83–94 (PSSSGSASTPQE) are compositionally biased toward polar residues. A compositionally biased stretch (basic and acidic residues) spans 95-107 (EQTKEGACEDPHD). Positions 113-202 (TPELLLDWRQ…VPMLTWPSLL (90 aa)) constitute a CS 1 domain. Residues 234 to 255 (KAVPPGNDPVSPAMVRSRNPGK) are disordered. Phosphoserine is present on serine 244. The CS 2 domain maps to 282–384 (LAFVKNDSYE…RQSQRWGGLE (103 aa)). Residues 390 to 479 (VGGAKVAVPT…PMPHSPVSGD (90 aa)) form a disordered region. Basic and acidic residues-rich tracts occupy residues 420–436 (EEAR…RSED) and 447–457 (PMEHVTPKPET). The USP domain maps to 497 to 1214 (TGLVNLGNTC…YAYVLFYRRR (718 aa)). The Nucleophile role is filled by cysteine 506. Residues cysteine 791, cysteine 794, cysteine 808, cysteine 811, cysteine 817, cysteine 821, histidine 829, and cysteine 833 each coordinate Zn(2+). Residues 791–833 (CAACQRKQQSEDEKLKRCTRCYRVGYCNQLCQKTHWPDHKGLC) form an MYND-type zinc finger. Histidine 1165 acts as the Proton acceptor in catalysis. Over residues 1218-1232 (VERPPRAGHSEHHPD) the composition is skewed to basic and acidic residues. Residues 1218–1239 (VERPPRAGHSEHHPDLGPAAEA) are disordered. Residues 1292 to 1312 (FVLGTVAALVALVLNVFYPLV) traverse the membrane as a helical segment. At 1313–1318 (SQSRWR) the chain is on the lumenal side.

This sequence belongs to the peptidase C19 family. As to quaternary structure, interacts with RNF123. Interacts with BIRC2/c-IAP1, BIRC3/c-IAP2 and XIAP/BIRC4. Interacts with HIF1A (via N-terminus). Interacts (via N-terminus) with HSP90AA1; this interaction activates the deubiquitinase activity of USP19.

It localises to the endoplasmic reticulum membrane. The enzyme catalyses Thiol-dependent hydrolysis of ester, thioester, amide, peptide and isopeptide bonds formed by the C-terminal Gly of ubiquitin (a 76-residue protein attached to proteins as an intracellular targeting signal).. Deubiquitinating enzyme that regulates the degradation of various proteins by removing ubiquitin moieties, thereby preventing their proteasomal degradation. Stabilizes RNF123, which promotes CDKN1B degradation and contributes to cell proliferation. Decreases the levels of ubiquitinated proteins during skeletal muscle formation and acts to repress myogenesis. Modulates transcription of major myofibrillar proteins. Also involved in turnover of endoplasmic-reticulum-associated degradation (ERAD) substrates. Mechanistically, deubiquitinates and thereby stabilizes several E3 ligases involved in the ERAD pathway including SYVN1 or MARCHF6. Regulates the stability of other E3 ligases including BIRC2/c-IAP1 and BIRC3/c-IAP2 by preventing their ubiquitination. Required for cells to mount an appropriate response to hypoxia by rescuing HIF1A from degradation in a non-catalytic manner and by mediating the deubiquitination of FUNDC1. Attenuates mitochondrial damage and ferroptosis by targeting and stabilizing NADPH oxidase 4/NOX4. Negatively regulates TNF-alpha- and IL-1beta-triggered NF-kappa-B activation by hydrolyzing 'Lys-27'- and 'Lys-63'-linked polyubiquitin chains from MAP3K7. Modulates also the protein level and aggregation of polyQ-expanded huntingtin/HTT through HSP90AA1. The protein is Ubiquitin carboxyl-terminal hydrolase 19 (USP19) of Homo sapiens (Human).